A 204-amino-acid chain; its full sequence is Fluoride-specific ion channel FluC 3 (204 aa).

Over residues 1-16 (MRADESGPERESREPT) the composition is skewed to basic and acidic residues. A disordered region spans residues 1-53 (MRADESGPERESREPTHIPGAEPELGGEPTPRGEPGPGFEPGPGGEPAPSRAP). Over residues 32 to 46 (RGEPGPGFEPGPGGE) the composition is skewed to pro residues. Transmembrane regions (helical) follow at residues 62–82 (VLAA…ALGL), 96–116 (FAVN…VLEI), 125–145 (PFAA…MVDT), and 158–178 (AFNV…GLAI). 2 residues coordinate Na(+): Gly-133 and Thr-136.

Belongs to the fluoride channel Fluc/FEX (TC 1.A.43) family.

The protein resides in the cell membrane. It carries out the reaction fluoride(in) = fluoride(out). With respect to regulation, na(+) is not transported, but it plays an essential structural role and its presence is essential for fluoride channel function. Its function is as follows. Fluoride-specific ion channel. Important for reducing fluoride concentration in the cell, thus reducing its toxicity. The chain is Fluoride-specific ion channel FluC 3 from Streptomyces avermitilis (strain ATCC 31267 / DSM 46492 / JCM 5070 / NBRC 14893 / NCIMB 12804 / NRRL 8165 / MA-4680).